The following is a 228-amino-acid chain: 2,3-bisphosphoglycerate-dependent phosphoglycerate mutase (228 aa).

Substrate contacts are provided by residues 8–15 (RHGQSAWN), 21–22 (TG), Arg60, 87–90 (ERHY), Lys98, 114–115 (RR), and 180–181 (GN). His9 serves as the catalytic Tele-phosphohistidine intermediate. Glu87 acts as the Proton donor/acceptor in catalysis.

This sequence belongs to the phosphoglycerate mutase family. BPG-dependent PGAM subfamily. As to quaternary structure, homodimer.

It catalyses the reaction (2R)-2-phosphoglycerate = (2R)-3-phosphoglycerate. The protein operates within carbohydrate degradation; glycolysis; pyruvate from D-glyceraldehyde 3-phosphate: step 3/5. In terms of biological role, catalyzes the interconversion of 2-phosphoglycerate and 3-phosphoglycerate. The protein is 2,3-bisphosphoglycerate-dependent phosphoglycerate mutase of Rhizorhabdus wittichii (strain DSM 6014 / CCUG 31198 / JCM 15750 / NBRC 105917 / EY 4224 / RW1) (Sphingomonas wittichii).